The following is a 276-amino-acid chain: Octanoyltransferase LipM (276 aa).

Residues 33-247 (GELKPTLRFY…GFKDAFSLTF (215 aa)) form the BPL/LPL catalytic domain. C150 serves as the catalytic Acyl-thioester intermediate.

Belongs to the octanoyltransferase LipM family. In terms of assembly, monomer.

It carries out the reaction octanoyl-[ACP] + L-lysyl-[protein] = N(6)-octanoyl-L-lysyl-[protein] + holo-[ACP] + H(+). It functions in the pathway protein modification; protein lipoylation via endogenous pathway; protein N(6)-(lipoyl)lysine from octanoyl-[acyl-carrier-protein]. In terms of biological role, catalyzes the transfer of endogenously produced octanoic acid from octanoyl-acyl-carrier-protein onto the lipoyl domain of GcvH, an intermediate carrier during protein lipoylation. The polypeptide is Octanoyltransferase LipM (Exiguobacterium sp. (strain ATCC BAA-1283 / AT1b)).